Reading from the N-terminus, the 504-residue chain is Ribose import ATP-binding protein RbsA (504 aa).

2 ABC transporter domains span residues 6 to 242 (LELN…VGRR) and 250 to 495 (IDVQ…VGKT). 38–45 (GENGAGKS) is an ATP binding site.

This sequence belongs to the ABC transporter superfamily. Ribose importer (TC 3.A.1.2.1) family. The complex is composed of an ATP-binding protein (RbsA), two transmembrane proteins (RbsC) and a solute-binding protein (RbsB).

It is found in the cell inner membrane. The enzyme catalyses D-ribose(out) + ATP + H2O = D-ribose(in) + ADP + phosphate + H(+). Functionally, part of the ABC transporter complex RbsABC involved in ribose import. Responsible for energy coupling to the transport system. This is Ribose import ATP-binding protein RbsA from Aliivibrio fischeri (strain ATCC 700601 / ES114) (Vibrio fischeri).